The chain runs to 201 residues: Probable chemoreceptor glutamine deamidase CheD 2 (201 aa).

The protein belongs to the CheD family.

It catalyses the reaction L-glutaminyl-[protein] + H2O = L-glutamyl-[protein] + NH4(+). Functionally, probably deamidates glutamine residues to glutamate on methyl-accepting chemotaxis receptors (MCPs), playing an important role in chemotaxis. In Chromobacterium violaceum (strain ATCC 12472 / DSM 30191 / JCM 1249 / CCUG 213 / NBRC 12614 / NCIMB 9131 / NCTC 9757 / MK), this protein is Probable chemoreceptor glutamine deamidase CheD 2.